A 723-amino-acid polypeptide reads, in one-letter code: Polyribonucleotide nucleotidyltransferase (723 aa).

2 residues coordinate Mg(2+): aspartate 488 and aspartate 494. Residues 555 to 614 (PKIITLNIKPEKIKDVIGPGGKQINAIIEETGVKIDIEQDGTVYIASQDQAMNRKAIAII) form the KH domain. Residues 624–692 (GEVYTGKVRR…HQGRVNLSRK (69 aa)) enclose the S1 motif domain. The disordered stretch occupies residues 692–723 (KALLEKKEQPEGDKKPQAEKKFYPKTKKPESK). The segment covering 693–723 (ALLEKKEQPEGDKKPQAEKKFYPKTKKPESK) has biased composition (basic and acidic residues).

The protein belongs to the polyribonucleotide nucleotidyltransferase family. It depends on Mg(2+) as a cofactor.

The protein localises to the cytoplasm. It carries out the reaction RNA(n+1) + phosphate = RNA(n) + a ribonucleoside 5'-diphosphate. Functionally, involved in mRNA degradation. Catalyzes the phosphorolysis of single-stranded polyribonucleotides processively in the 3'- to 5'-direction. The polypeptide is Polyribonucleotide nucleotidyltransferase (Listeria welshimeri serovar 6b (strain ATCC 35897 / DSM 20650 / CCUG 15529 / CIP 8149 / NCTC 11857 / SLCC 5334 / V8)).